A 225-amino-acid chain; its full sequence is Probable septum site-determining protein MinC (225 aa).

Belongs to the MinC family. Interacts with MinD and FtsZ.

Cell division inhibitor that blocks the formation of polar Z ring septums. Rapidly oscillates between the poles of the cell to destabilize FtsZ filaments that have formed before they mature into polar Z rings. Prevents FtsZ polymerization. This chain is Probable septum site-determining protein MinC, found in Listeria monocytogenes serotype 4b (strain CLIP80459).